Consider the following 327-residue polypeptide: uncharacterized protein (327 aa).

4 helical membrane-spanning segments follow: residues 68–88 (SIPA…LFYP), 92–112 (FLHL…VDIF), 127–147 (WVAL…HLAA), and 148–168 (IAIW…YIIL).

It is found in the cell membrane. May act as a negative regulator for the transcription of mutY, fabL, sspE and yfhP. This is an uncharacterized protein from Bacillus subtilis (strain 168).